Here is a 416-residue protein sequence, read N- to C-terminus: Squalene synthase (416 aa).

Residues Arg52 and Arg77 each coordinate NADP(+). Mg(2+) is bound by residues Asp80, Glu83, and Asp84. Arg218 is a binding site for NADP(+). Residues 284–304 (SVFNFCAIPQVMAIATLAACY) form a helical membrane-spanning segment. Lys315 and Arg317 together coordinate NADP(+). The helical transmembrane segment at 384–404 (PIYLSFIMLLAALSWQYLSTL) threads the bilayer.

The protein belongs to the phytoene/squalene synthase family. Mg(2+) serves as cofactor.

It localises to the endoplasmic reticulum membrane. It carries out the reaction 2 (2E,6E)-farnesyl diphosphate + NADPH + H(+) = squalene + 2 diphosphate + NADP(+). The enzyme catalyses 2 (2E,6E)-farnesyl diphosphate + NADH + H(+) = squalene + 2 diphosphate + NAD(+). It catalyses the reaction presqualene diphosphate + NADH + H(+) = squalene + diphosphate + NAD(+). The catalysed reaction is presqualene diphosphate + NADPH + H(+) = squalene + diphosphate + NADP(+). It carries out the reaction 2 (2E,6E)-farnesyl diphosphate = presqualene diphosphate + diphosphate. The protein operates within terpene metabolism; lanosterol biosynthesis; lanosterol from farnesyl diphosphate: step 1/3. Functionally, catalyzes the condensation of 2 farnesyl pyrophosphate (FPP) moieties to form squalene. Proceeds in two distinct steps. In the first half-reaction, two molecules of FPP react to form the stable presqualene diphosphate intermediate (PSQPP), with concomitant release of a proton and a molecule of inorganic diphosphate. In the second half-reaction, PSQPP undergoes heterolysis, isomerization, and reduction with NADPH or NADH to form squalene. It is the first committed enzyme of the sterol biosynthesis pathway. This Rattus norvegicus (Rat) protein is Squalene synthase (Fdft1).